A 287-amino-acid polypeptide reads, in one-letter code: D-alanine--D-alanine ligase (287 aa).

The region spanning 98–283 (KTKQIAQSVG…FDDVVRITVE (186 aa)) is the ATP-grasp domain. 124-169 (PVIIKPVDEGSSKGLFLCNNKEEAEEAVKKLAKPIIEDYIIGEELT) lines the ATP pocket. Mg(2+) contacts are provided by Asp238, Glu250, and Asn252.

This sequence belongs to the D-alanine--D-alanine ligase family. Mg(2+) serves as cofactor. It depends on Mn(2+) as a cofactor.

The protein localises to the cytoplasm. It catalyses the reaction 2 D-alanine + ATP = D-alanyl-D-alanine + ADP + phosphate + H(+). Its pathway is cell wall biogenesis; peptidoglycan biosynthesis. In terms of biological role, cell wall formation. In Fusobacterium nucleatum subsp. nucleatum (strain ATCC 25586 / DSM 15643 / BCRC 10681 / CIP 101130 / JCM 8532 / KCTC 2640 / LMG 13131 / VPI 4355), this protein is D-alanine--D-alanine ligase.